The sequence spans 122 residues: Large ribosomal subunit protein uL14 (122 aa).

It belongs to the universal ribosomal protein uL14 family. Part of the 50S ribosomal subunit. Forms a cluster with proteins L3 and L19. In the 70S ribosome, L14 and L19 interact and together make contacts with the 16S rRNA in bridges B5 and B8.

Binds to 23S rRNA. Forms part of two intersubunit bridges in the 70S ribosome. This chain is Large ribosomal subunit protein uL14, found in Mycoplasma capricolum subsp. capricolum (strain California kid / ATCC 27343 / NCTC 10154).